Reading from the N-terminus, the 200-residue chain is Pyridoxamine 5'-phosphate oxidase homolog (200 aa).

3 residues coordinate FMN: F60, K68, and N125.

Belongs to the pyridoxamine 5'-phosphate oxidase family. The cofactor is FMN.

The protein resides in the cytoplasm. The protein localises to the nucleus. In Saccharomyces cerevisiae (strain ATCC 204508 / S288c) (Baker's yeast), this protein is Pyridoxamine 5'-phosphate oxidase homolog.